The chain runs to 427 residues: Tuberculostearic acid methyltransferase UfaA1 (427 aa).

It belongs to the CFA/CMAS family.

It functions in the pathway lipid metabolism; fatty acid biosynthesis. With respect to regulation, inhibited by S-adenosyl-L-homocysteine. In terms of biological role, involved in the biosynthesis of the tuberculostearic acid (10-methylstearic-acid or TSA), a constituent lipid of the mycobacterial cell wall. Catalyzes the transfer of the methyl group from S-adenosyl-L-methionine (SAM) to the double bond of oleic acid in phosphatidylethanolamine or phosphatidylcholine to produce TSA. In Mycobacterium tuberculosis (strain ATCC 25618 / H37Rv), this protein is Tuberculostearic acid methyltransferase UfaA1.